The primary structure comprises 580 residues: Small conductance calcium-activated potassium channel protein 2 (580 aa).

2 disordered regions span residues 1 to 68 (MSSC…VSKP) and 88 to 116 (GGGGGGGGGGGGSGHGSSSGTKSSKKKNQ). Positions 48–61 (SSPSAAAAASSSAP) are enriched in low complexity. The segment covering 88 to 104 (GGGGGGGGGGGGSGHGS) has biased composition (gly residues). The helical transmembrane segment at 140 to 160 (LIFGMFGIVVMVIETELSWGA) threads the bilayer. Y161 carries the post-translational modification Phosphotyrosine. Residues 169–189 (LALKCLISLSTIILLGLIIVY) form a helical membrane-spanning segment. The chain crosses the membrane as a helical span at residues 215 to 235 (IFFICLEILVCAIHPIPGNYT). A helical membrane pass occupies residues 257 to 277 (IILSIPMFLRLYLIARVMLLH). The helical transmembrane segment at 306-326 (LMTICPGTVLLVFSISLWIIA) threads the bilayer. Residues 346–366 (FLGAMWLISITFLSIGYGDMV) constitute an intramembrane region (pore-forming). Residues 375 to 395 (VCLLTGIMGAGCTALVVAVVA) traverse the membrane as a helical segment. Positions 413–489 (DTQLTKRVKN…LVDLAKTQNI (77 aa)) are calmodulin-binding. The span at 551-560 (HVTYNAERSR) shows a compositional bias: basic and acidic residues. The tract at residues 551-580 (HVTYNAERSRSSSRRRRSSSTAPPTSSESS) is disordered. A compositionally biased stretch (low complexity) spans 569–580 (SSTAPPTSSESS).

This sequence belongs to the potassium channel KCNN family. KCa2.2/KCNN2 subfamily. As to quaternary structure, homodimer. Heteromultimer with KCNN1 and KCNN3. The complex is composed of 4 channel subunits each of which binds to a calmodulin subunit which regulates the channel activity through calcium-binding. Interacts (via N-terminal domain) with MPP2. Brain.

It is found in the membrane. The protein localises to the cytoplasm. Its subcellular location is the myofibril. It localises to the sarcomere. The protein resides in the z line. The enzyme catalyses K(+)(in) = K(+)(out). Its activity is regulated as follows. Inhibited by bee venom neurotoxin apamin. Inhibited by UCL 1684 and tetraethylammonium (TEA). Its function is as follows. Small conductance calcium-activated potassium channel that mediates the voltage-independent transmembrane transfer of potassium across the cell membrane through a constitutive interaction with calmodulin which binds the intracellular calcium allowing its opening. The current is characterized by a voltage-independent activation, an intracellular calcium concentration increase-dependent activation and a single-channel conductance of about 3 picosiemens. Also presents an inwardly rectifying current, thus reducing its already small outward conductance of potassium ions, which is particularly the case when the membrane potential displays positive values, above + 20 mV. The inward rectification could be due to a blockade of the outward current by intracellular divalent cations such as calcium and magnesium and could also be due to an intrinsic property of the channel pore, independent of intracellular divalent ions. There are three positively charged amino acids in the S6 transmembrane domain, close to the pore, that collectively control the conductance and rectification through an electrostatic mechanism. Additionally, electrostatic contributions from these residues also play an important role in determining the intrinsic open probability of the channel in the absence of calcium, affecting the apparent calcium affinity for activation. Forms an heteromeric complex with calmodulin, which is constitutively associated in a calcium-independent manner. Channel opening is triggered when calcium binds the calmodulin resulting in a rotary movement leading to the formation of the dimeric complex to open the gate. Plays a role in the repolarization phase of cardiac action potential. The protein is Small conductance calcium-activated potassium channel protein 2 of Rattus norvegicus (Rat).